The following is a 197-amino-acid chain: ATP-dependent Clp protease proteolytic subunit 1 (197 aa).

S96 acts as the Nucleophile in catalysis. H121 is an active-site residue.

The protein belongs to the peptidase S14 family. As to quaternary structure, fourteen ClpP subunits assemble into 2 heptameric rings which stack back to back to give a disk-like structure with a central cavity, resembling the structure of eukaryotic proteasomes.

It is found in the cytoplasm. It carries out the reaction Hydrolysis of proteins to small peptides in the presence of ATP and magnesium. alpha-casein is the usual test substrate. In the absence of ATP, only oligopeptides shorter than five residues are hydrolyzed (such as succinyl-Leu-Tyr-|-NHMec, and Leu-Tyr-Leu-|-Tyr-Trp, in which cleavage of the -Tyr-|-Leu- and -Tyr-|-Trp bonds also occurs).. Functionally, cleaves peptides in various proteins in a process that requires ATP hydrolysis. Has a chymotrypsin-like activity. Plays a major role in the degradation of misfolded proteins. The chain is ATP-dependent Clp protease proteolytic subunit 1 from Synechococcus sp. (strain CC9902).